Here is a 1020-residue protein sequence, read N- to C-terminus: MPRNVYGMNQSEVYRNVDREDPKAILNGVAVTGLVGVLRQLGDLAEFAAEIFHGIQEEVMATASRSNQLKIRLQHIEATVPPLEKAMLAQTTHIHFAYTGGLEWHPRIPITQNHLIYDDLPHIIMDPYEECRGPPRLHLLDKFDINGPGSCLKRYSDPTYFRRASSNLSQGNKKFQKDKKHCKMKKKKTSSRSRDMSRLASLANQNARKTFASFSFSGQTSSTKTTSTSDMEKRYDFQDHHSRSFESRSGSGYNECLSTATSSLKTGERPKGVFVSSSLTPGSCTIASVLSECETEDAHDNFQFSPSQGQAARGSSCVSWDEKAEIVESLGLQTDEASEMVEANSVVDTLDEKPSYGEGIGGVDFHSKDNENDKSESGLRKRAGIDEVREIKNGREIVGEPRDSEQETESEGECFVDALNTIESESENNQGLQTSQVSSSCGVADERLEKSVCEQETEQNSYSVEDSCRSMDGLMANSFKNEENASSENVSVEMHQQNLQAGSDINRLQKNDLCANKDMRNDSGGKDTITFTFVPGLENSLVDSSNPLIHHGLQENQETEAESSGDLEAFKIWTNGGLLGLKPSKPPVLAMPSSLSPDCKTEERTVGFAEAEKDKADDLVENASHRHVLNNSSLATPGTQNPGSSNGIVMGIVDQRESHETSSGVFGLSHKFLTSGFRRKDSFAHDRKTVPATIPENDEVTTERRRFCDQDINEKTFMDPFRDEAPIDWITSSPPLQHMKISLNPADTLQASRLKLKFSDGDNTYNTFSSFQLLPETGTSLPDSYSDDDTFCRSSPYMSDTDYLSDNHSLSNSEPWEESSDSHGRKEQELYDSFHESRHVDNNAEASPLGIKSESSCVAVNLSYLQNPAEPLPPPFPPMQWMVSKTPSEKMEDKTQSLQLQEALRFAFEKHISLPTAKNELPSMVTSAPKPEIKAHLKNNVREEKQSANAKETETGDFLQQIRTQQFNLRPVVMTTTSSATATTDPIINTKISAILEKANSIRQAVASKDGDESDTWSDT.

Disordered stretches follow at residues 167 to 198, 351 to 382, and 802 to 827; these read NLSQ…DMSR, DEKP…LRKR, and DYLS…GRKE. Residues 174-191 are compositionally biased toward basic residues; the sequence is KFQKDKKHCKMKKKKTSS. Positions 365–382 are enriched in basic and acidic residues; that stretch reads FHSKDNENDKSESGLRKR. Residues 802–814 show a composition bias toward polar residues; sequence DYLSDNHSLSNSE. The 19-residue stretch at 954 to 972 folds into the WH2 domain; it reads ETGDFLQQIRTQQFNLRPV.

The protein belongs to the SCAR/WAVE family. As to quaternary structure, binds BRK1. Interacts with SPK1, ABI1, ABI2, ABI3 and ABI4. As to expression, expressed in expanding cotyledons, expanding leaves and expanding siliques containing developing embryos. Detected in unopened flower buds. Reduced expression in mature leaves and mature cotyledons.

It localises to the cytoplasm. It is found in the cytoskeleton. In terms of biological role, involved in regulation of actin and microtubule organization. Part of a WAVE complex that activates the Arp2/3 complex. Regulates trichome branch positioning and expansion. The protein is Protein SCAR3 (SCAR3) of Arabidopsis thaliana (Mouse-ear cress).